A 399-amino-acid polypeptide reads, in one-letter code: Elongation factor Tu (399 aa).

The tr-type G domain occupies 10 to 204 (KPHVNIGTIG…AVDASIPEPE (195 aa)). The tract at residues 19–26 (GHVDHGKT) is G1. 19–26 (GHVDHGKT) lines the GTP pocket. Residue threonine 26 participates in Mg(2+) binding. Residues 60-64 (GITIN) are G2. Residues 81–84 (DCPG) form a G3 region. GTP is bound by residues 81 to 85 (DCPGH) and 136 to 139 (NKCD). Residues 136–139 (NKCD) are G4. The segment at 174 to 176 (SGL) is G5.

It belongs to the TRAFAC class translation factor GTPase superfamily. Classic translation factor GTPase family. EF-Tu/EF-1A subfamily. As to quaternary structure, monomer.

It is found in the cytoplasm. It catalyses the reaction GTP + H2O = GDP + phosphate + H(+). GTP hydrolase that promotes the GTP-dependent binding of aminoacyl-tRNA to the A-site of ribosomes during protein biosynthesis. The protein is Elongation factor Tu of Prochlorococcus marinus (strain MIT 9313).